A 421-amino-acid chain; its full sequence is Cyclin-A1 (421 aa).

The segment at M1 to D20 is disordered.

It belongs to the cyclin family. Cyclin AB subfamily. In terms of assembly, interacts with the CDK2 and the CDC2 protein kinases to form a serine/threonine kinase holoenzyme complex. The cyclin subunit imparts substrate specificity to the complex. Does not bind CDK4 and CDK5 (in vitro). The cyclin A1-CDK2 complex interacts with transcription factor E2F-1 and RB proteins. Found in a complex with CDK2, CABLES1 and CCNE1. Interacts with INCA1 and KLHDC9. Polyubiquitinated via 'Lys-11'-linked ubiquitin by the anaphase-promoting complex (APC/C), leading to its degradation by the proteasome. Deubiquitinated and stabilized by USP37 enables entry into S phase. Ubiquitinated during the G1 phase by the SCF(FBXO31) complex, leading to its proteasomal degradation.

The protein localises to the nucleus. In terms of biological role, may be involved in the control of the cell cycle at the G1/S (start) and G2/M (mitosis) transitions. May primarily function in the control of the germline meiotic cell cycle and additionally in the control of mitotic cell cycle in some somatic cells. This is Cyclin-A1 (Ccna1) from Rattus norvegicus (Rat).